The sequence spans 117 residues: NADH-ubiquinone oxidoreductase chain 3 (117 aa).

The next 3 membrane-spanning stretches (helical) occupy residues 3 to 23, 56 to 76, and 85 to 105; these read LLLT…IVSF, FFLV…LLPL, and PMFT…GLIY.

It belongs to the complex I subunit 3 family.

It is found in the mitochondrion membrane. It catalyses the reaction a ubiquinone + NADH + 5 H(+)(in) = a ubiquinol + NAD(+) + 4 H(+)(out). In terms of biological role, core subunit of the mitochondrial membrane respiratory chain NADH dehydrogenase (Complex I) that is believed to belong to the minimal assembly required for catalysis. Complex I functions in the transfer of electrons from NADH to the respiratory chain. The immediate electron acceptor for the enzyme is believed to be ubiquinone. The sequence is that of NADH-ubiquinone oxidoreductase chain 3 (MT-ND3) from Tetraodon nigroviridis (Spotted green pufferfish).